A 224-amino-acid polypeptide reads, in one-letter code: Ribose-5-phosphate isomerase A 1 (224 aa).

Substrate-binding positions include 29–32 (SGST), 85–88 (DGAD), and 98–101 (KGGG). Residue Glu-107 is the Proton acceptor of the active site. Lys-125 serves as a coordination point for substrate.

The protein belongs to the ribose 5-phosphate isomerase family. Homodimer.

It catalyses the reaction aldehydo-D-ribose 5-phosphate = D-ribulose 5-phosphate. The protein operates within carbohydrate degradation; pentose phosphate pathway; D-ribose 5-phosphate from D-ribulose 5-phosphate (non-oxidative stage): step 1/1. Functionally, catalyzes the reversible conversion of ribose-5-phosphate to ribulose 5-phosphate. The sequence is that of Ribose-5-phosphate isomerase A 1 from Oceanobacillus iheyensis (strain DSM 14371 / CIP 107618 / JCM 11309 / KCTC 3954 / HTE831).